Consider the following 114-residue polypeptide: Transmembrane protein 256 homolog (114 aa).

Positions 1-25 are cleaved as a signal peptide; it reads MAAGRVWGRLGAVSGALAVTAGAYG. The Extracellular portion of the chain corresponds to 26–64; sequence AHGFRRSDRDEYLKELFETGNRYHFLHSLALLAVPHCRR. Residues 65–85 form a helical membrane-spanning segment; that stretch reads PLLAGSLLTSGIVLFSGTFYY. The Cytoplasmic portion of the chain corresponds to 86-93; the sequence is QALSGDPT. Residues 94–114 form a helical membrane-spanning segment; sequence LTKAAPYGGTLLILGWAAMAL.

The protein belongs to the TMEM256 family.

It localises to the cell membrane. This Bufo gargarizans (Asian toad) protein is Transmembrane protein 256 homolog.